We begin with the raw amino-acid sequence, 123 residues long: Intracellular iron chaperone frataxin (123 aa).

As to quaternary structure, homodimer, upon Fe(2+) binding. Interacts with the SufS/SufU complex. Interacts with CpfC. Fe(2+) is required as a cofactor.

Its subcellular location is the cytoplasm. Plays an essential role in iron intracellular trafficking to iron cofactor biogenesis systems including iron-sulfur cluster (Fe-S) or heme assembly. Promotes the biosynthesis of iron-sulfur clusters by delivering Fe to the complex composed of the cysteine desulfurase SufS and the zinc-dependent sulfurtransferase SufU. Also plays a critical role in coproporphyrin-dependent heme b biogenesis and thus provides an essential function for the bacterial global metabolism. In Bacillus subtilis (strain 168), this protein is Intracellular iron chaperone frataxin (fra).